The sequence spans 360 residues: Cell division protein DivIB (360 aa).

The tract at residues 1 to 54 is disordered; sequence MTEKDSNVEESVLEVEQASQVELDSEQISPAEKESVLAEEKEFSTDVDIPEMTA. Topologically, residues 1-139 are cytoplasmic; it reads MTEKDSNVEE…VDIPSKVVWK (139 aa). Residues 17 to 28 are compositionally biased toward polar residues; that stretch reads QASQVELDSEQI. A compositionally biased stretch (basic and acidic residues) spans 31–44; sequence AEKESVLAEEKEFS. A helical transmembrane segment spans residues 140–160; it reads AIPVLVTSLLLAALALYFISP. Residues 161–360 are Extracellular-facing; it reads TSKKKQIEVV…MEVGIYRYAS (200 aa). Positions 162-233 constitute a POTRA domain; sequence SKKKQIEVVG…ATFTIHIKEY (72 aa).

Belongs to the FtsQ/DivIB family. DivIB subfamily.

The protein localises to the cell membrane. Cell division protein that may be involved in stabilizing or promoting the assembly of the division complex. This is Cell division protein DivIB from Streptococcus suis (strain GZ1).